The primary structure comprises 548 residues: MRSDITKSGPERAPHRALLKAMGITDDEIKRPFIGVANSANEFVPGHIHLDRIAEAVKAGIRIAGGVPFEFQTIGVCDGIAMGHGGMRYSLPSREIIEDSIEIMAQAHQLDGLVLIPTCDKIVPGHLMAAGRLDLPTIVVTGGPMLPGFACDRELDLINVFEEWQKGGESLSILEDLACPGAGSCAGLFTANSMACMAEALGLSLPGCATAHAVDAKKMRIAKLSGMMIVELVKRGLTARKIVSRESFENAVRVDMAIGGSTNTALHLPAIAAEFDIDLELDVFDRLSRETPHLVNLRPGGPHHMLDLDRAGGVQAVMHRLSSKLDLSVLTVTGKTLGAVLAEFKPVNPKANAEVIATLERPVHPEGGIAILKGSLAPEGSVVKQTAVSKKMLVHKGPAVVYDSEEESMKGILSGEVKAGDVVVIRYEGPKGGPGMRETLAPTSAIAGAGLSESVALITDGRFSGGTRGPCIGHVSPEAAVGGPIALVENGDMISIDIPNRRLDLLVDEGVLERRRASWRPPEPRVRGGVLDRYRKSVTSASKGGVLR.

Asp78 is a binding site for Mg(2+). A [2Fe-2S] cluster-binding site is contributed by Cys119. Mg(2+) is bound by residues Asp120 and Lys121. Lys121 is modified (N6-carboxylysine). Cys185 provides a ligand contact to [2Fe-2S] cluster. Glu438 lines the Mg(2+) pocket. Ser464 functions as the Proton acceptor in the catalytic mechanism.

It belongs to the IlvD/Edd family. As to quaternary structure, homodimer. Requires [2Fe-2S] cluster as cofactor. The cofactor is Mg(2+).

The enzyme catalyses (2R)-2,3-dihydroxy-3-methylbutanoate = 3-methyl-2-oxobutanoate + H2O. The catalysed reaction is (2R,3R)-2,3-dihydroxy-3-methylpentanoate = (S)-3-methyl-2-oxopentanoate + H2O. The protein operates within amino-acid biosynthesis; L-isoleucine biosynthesis; L-isoleucine from 2-oxobutanoate: step 3/4. It functions in the pathway amino-acid biosynthesis; L-valine biosynthesis; L-valine from pyruvate: step 3/4. In terms of biological role, functions in the biosynthesis of branched-chain amino acids. Catalyzes the dehydration of (2R,3R)-2,3-dihydroxy-3-methylpentanoate (2,3-dihydroxy-3-methylvalerate) into 2-oxo-3-methylpentanoate (2-oxo-3-methylvalerate) and of (2R)-2,3-dihydroxy-3-methylbutanoate (2,3-dihydroxyisovalerate) into 2-oxo-3-methylbutanoate (2-oxoisovalerate), the penultimate precursor to L-isoleucine and L-valine, respectively. The chain is Dihydroxy-acid dehydratase from Methanothrix thermoacetophila (strain DSM 6194 / JCM 14653 / NBRC 101360 / PT) (Methanosaeta thermophila).